We begin with the raw amino-acid sequence, 200 residues long: Ras-related protein Rab5 (200 aa).

Residues 17–25 (GDMGAGKSS), 36–42 (LEFQEST), 65–69 (DTAGQ), 123–126 (NKAD), and 153–155 (SAK) each bind GTP. Residues 39–47 (QESTIGAAF) carry the Effector region motif. 2 S-geranylgeranyl cysteine lipidation sites follow: Cys-198 and Cys-199.

The protein belongs to the small GTPase superfamily. Rab family. In terms of tissue distribution, virtually not expressed in leaves, higher in stems and roots, and highest in flowers.

It is found in the cell membrane. Its function is as follows. Protein transport. Probably involved in vesicular traffic. This is Ras-related protein Rab5 (RAB5) from Nicotiana tabacum (Common tobacco).